A 231-amino-acid chain; its full sequence is LexA repressor (231 aa).

The segment at residues 28–48 (IREIGEALDIRSTNGVNDHLK) is a DNA-binding region (H-T-H motif). Residues Ser-149 and Lys-186 each act as for autocatalytic cleavage activity in the active site.

The protein belongs to the peptidase S24 family. As to quaternary structure, homodimer.

The catalysed reaction is Hydrolysis of Ala-|-Gly bond in repressor LexA.. Its function is as follows. Represses a number of genes involved in the response to DNA damage (SOS response), including recA and lexA. In the presence of single-stranded DNA, RecA interacts with LexA causing an autocatalytic cleavage which disrupts the DNA-binding part of LexA, leading to derepression of the SOS regulon and eventually DNA repair. The polypeptide is LexA repressor (Anaeromyxobacter sp. (strain Fw109-5)).